Consider the following 238-residue polypeptide: Outer membrane protein A (238 aa).

5 beta stranded membrane passes run Leu1–Pro8, Leu13–Gly21, Pro43–Ala52, Ile57–Gln64, and Leu83–Arg91. 3 tandem repeats follow at residues Ala104–Pro105, Ala106–Pro107, and Ala108–Pro109. Residues Ala104–Pro109 are 3 X 2 AA tandem repeats of A-P. An OmpA-like domain is found at Val111 to Ile238. An intrachain disulfide couples Cys212 to Cys224.

The protein belongs to the outer membrane OOP (TC 1.B.6) superfamily. OmpA family. Monomer and homodimer.

The protein resides in the cell outer membrane. Its function is as follows. With TolR probably plays a role in maintaining the position of the peptidoglycan cell wall in the periplasm. Acts as a porin with low permeability that allows slow penetration of small solutes; an internal gate slows down solute passage. The protein is Outer membrane protein A of Citrobacter freundii.